A 242-amino-acid polypeptide reads, in one-letter code: Carboxy-S-adenosyl-L-methionine synthase (242 aa).

S-adenosyl-L-methionine is bound by residues tyrosine 39, 64 to 66 (GCS), 89 to 90 (DN), 117 to 118 (DI), asparagine 132, and arginine 199.

It belongs to the class I-like SAM-binding methyltransferase superfamily. Cx-SAM synthase family. In terms of assembly, homodimer.

It carries out the reaction prephenate + S-adenosyl-L-methionine = carboxy-S-adenosyl-L-methionine + 3-phenylpyruvate + H2O. Functionally, catalyzes the conversion of S-adenosyl-L-methionine (SAM) to carboxy-S-adenosyl-L-methionine (Cx-SAM). The protein is Carboxy-S-adenosyl-L-methionine synthase of Aliivibrio fischeri (strain ATCC 700601 / ES114) (Vibrio fischeri).